We begin with the raw amino-acid sequence, 284 residues long: Proteasome subunit pbs-5 (284 aa).

Positions 1–64 (MWGETFDDFE…AGKSMQFRKG (64 aa)) are cleaved as a propeptide — removed in mature form. T65 functions as the Nucleophile in the catalytic mechanism.

It belongs to the peptidase T1B family. The 26S proteasome consists of a 20S proteasome core and two 19S regulatory subunits. The 20S proteasome core is composed of 28 subunits that are arranged in four stacked rings, resulting in a barrel-shaped structure. The two end rings are each formed by seven alpha subunits, and the two central rings are each formed by seven beta subunits. The catalytic chamber with the active sites is on the inside of the barrel.

It localises to the cytoplasm. Its subcellular location is the nucleus. It carries out the reaction Cleavage of peptide bonds with very broad specificity.. Its function is as follows. Component of the 20S core proteasome complex involved in the proteolytic degradation of most intracellular proteins. This complex plays numerous essential roles within the cell by associating with different regulatory particles. Associated with two 19S regulatory particles, forms the 26S proteasome and thus participates in the ATP-dependent degradation of ubiquitinated proteins. The 26S proteasome plays a key role in the maintenance of protein homeostasis by removing misfolded or damaged proteins that could impair cellular functions, and by removing proteins whose functions are no longer required. The sequence is that of Proteasome subunit pbs-5 from Caenorhabditis elegans.